Reading from the N-terminus, the 130-residue chain is Classical arabinogalactan protein 7 (130 aa).

The N-terminal stretch at 1 to 21 (MNSKIIEAFFIVALFTTSCLA) is a signal peptide. The residue at position 22 (glutamine 22) is a Pyrrolidone carboxylic acid. The interval 22-108 (QAPAPSPTTT…DASAPPPNAA (87 aa)) is disordered. 5 positions are modified to 4-hydroxyproline: proline 24, proline 26, proline 28, proline 35, and proline 36. O-linked (Ara...) hydroxyproline glycans are attached at residues proline 24, proline 26, proline 28, proline 35, and proline 36. Positions 33-68 (TPPPVATPPPAATPAPTTTPPPAVSPAPTSSPPSSA) are enriched in pro residues. A lipid anchor (GPI-anchor amidated asparagine) is attached at asparagine 106. A propeptide spans 107–130 (AALTNKAFVVGSLVAAIIYAVVLA) (removed in mature form).

The protein belongs to the classical AGP family. In terms of processing, O-glycosylated on hydroxyprolines; noncontiguous hydroxylproline residues are glycosylated with arabinogalactan.

It localises to the cell membrane. Its function is as follows. Proteoglycan that seems to be implicated in diverse developmental roles such as differentiation, cell-cell recognition, embryogenesis and programmed cell death. The protein is Classical arabinogalactan protein 7 (AGP7) of Arabidopsis thaliana (Mouse-ear cress).